The primary structure comprises 200 residues: Dephospho-CoA kinase (200 aa).

In terms of domain architecture, DPCK spans 3 to 200 (IIGLTGGIGS…LWQRFATQVE (198 aa)). 11–16 (GSGKST) serves as a coordination point for ATP.

Belongs to the CoaE family.

Its subcellular location is the cytoplasm. It carries out the reaction 3'-dephospho-CoA + ATP = ADP + CoA + H(+). It participates in cofactor biosynthesis; coenzyme A biosynthesis; CoA from (R)-pantothenate: step 5/5. Functionally, catalyzes the phosphorylation of the 3'-hydroxyl group of dephosphocoenzyme A to form coenzyme A. The chain is Dephospho-CoA kinase from Corynebacterium diphtheriae (strain ATCC 700971 / NCTC 13129 / Biotype gravis).